Consider the following 422-residue polypeptide: Metallocarboxypeptidase A-like protein TRV_02598 (422 aa).

An N-terminal signal peptide occupies residues 1–16 (MQSLLLLATLLGSALG). The propeptide at 17–119 (GAIPSQSANY…ELLTLDGGAN (103 aa)) is activation peptide. The region spanning 125-421 (SYHKYEDHLK…AGVKAMFSKL (297 aa)) is the Peptidase M14 domain. Residues His-185 and Glu-188 each coordinate Zn(2+). Substrate is bound by residues 185 to 188 (HARE), Arg-240, and 256 to 257 (NR). An intrachain disulfide couples Cys-250 to Cys-273. A Zn(2+)-binding site is contributed by His-311. A substrate-binding site is contributed by 312 to 313 (SY). The Proton donor/acceptor role is filled by Glu-387.

It belongs to the peptidase M14 family. Zn(2+) is required as a cofactor.

It localises to the secreted. In terms of biological role, extracellular metalloprotease that contributes to pathogenicity. In Trichophyton verrucosum (strain HKI 0517), this protein is Metallocarboxypeptidase A-like protein TRV_02598.